Consider the following 154-residue polypeptide: L-alanine exporter AlaE (154 aa).

The next 4 membrane-spanning stretches (helical) occupy residues 21–41 (FAMVVYCTVVNMLIEIFLSGM), 51–71 (LVAIPVNILIACPYGIYRDFF), 90–110 (ILAYVTFQSPVYAAILWVIGA), and 115–135 (IVAAVSSNMVISMMMGAVYGY).

The protein belongs to the AlaE exporter family.

The protein resides in the cell inner membrane. Its function is as follows. Exports L-alanine. This chain is L-alanine exporter AlaE, found in Escherichia fergusonii (strain ATCC 35469 / DSM 13698 / CCUG 18766 / IAM 14443 / JCM 21226 / LMG 7866 / NBRC 102419 / NCTC 12128 / CDC 0568-73).